Consider the following 254-residue polypeptide: Small ribosomal subunit protein uS2 (254 aa).

Belongs to the universal ribosomal protein uS2 family.

The sequence is that of Small ribosomal subunit protein uS2 from Oceanobacillus iheyensis (strain DSM 14371 / CIP 107618 / JCM 11309 / KCTC 3954 / HTE831).